The chain runs to 225 residues: Transcriptional activator protein BglJ (225 aa).

An HTH luxR-type domain is found at Tyr146–Leu211. The H-T-H motif DNA-binding region spans Met170–Phe189.

As to quaternary structure, forms a complex with RcsB; genetically both BglJ and RcsB are required to relieve bgl operon repression by H-NS and by StpA.

A crytic transcriptional activator. When its expression is induced it relieves H-NS repression of the bgl operon. Acts independently of transcription factor LeuO. The polypeptide is Transcriptional activator protein BglJ (bglJ) (Escherichia coli (strain K12)).